Consider the following 481-residue polypeptide: Glutamyl-tRNA(Gln) amidotransferase subunit A (481 aa).

Catalysis depends on charge relay system residues Lys-76 and Ser-151. Catalysis depends on Ser-175, which acts as the Acyl-ester intermediate.

Belongs to the amidase family. GatA subfamily. Heterotrimer of A, B and C subunits.

The enzyme catalyses L-glutamyl-tRNA(Gln) + L-glutamine + ATP + H2O = L-glutaminyl-tRNA(Gln) + L-glutamate + ADP + phosphate + H(+). Functionally, allows the formation of correctly charged Gln-tRNA(Gln) through the transamidation of misacylated Glu-tRNA(Gln) in organisms which lack glutaminyl-tRNA synthetase. The reaction takes place in the presence of glutamine and ATP through an activated gamma-phospho-Glu-tRNA(Gln). In Chlorobaculum tepidum (strain ATCC 49652 / DSM 12025 / NBRC 103806 / TLS) (Chlorobium tepidum), this protein is Glutamyl-tRNA(Gln) amidotransferase subunit A.